Here is a 369-residue protein sequence, read N- to C-terminus: Glycerol-3-phosphate dehydrogenase [NAD(P)+] (369 aa).

NADPH contacts are provided by S6, W7, R27, R28, and K101. 2 residues coordinate sn-glycerol 3-phosphate: K101 and G131. Residue A135 coordinates NADPH. Sn-glycerol 3-phosphate is bound by residues K186, D239, S249, R250, and N251. The active-site Proton acceptor is the K186. An NADPH-binding site is contributed by R250. Residue E276 participates in NADPH binding. The interval 312–369 (KDIAPHLTTDDEPQGERTRGERTTDDGQGQGRTSVWGSLKRAFDQLRDGGGSSRRDRP) is disordered. Composition is skewed to basic and acidic residues over residues 325–336 (QGERTRGERTTD) and 352–369 (RAFD…RDRP).

The protein belongs to the NAD-dependent glycerol-3-phosphate dehydrogenase family.

The protein resides in the cytoplasm. The catalysed reaction is sn-glycerol 3-phosphate + NAD(+) = dihydroxyacetone phosphate + NADH + H(+). The enzyme catalyses sn-glycerol 3-phosphate + NADP(+) = dihydroxyacetone phosphate + NADPH + H(+). Its pathway is membrane lipid metabolism; glycerophospholipid metabolism. Functionally, catalyzes the reduction of the glycolytic intermediate dihydroxyacetone phosphate (DHAP) to sn-glycerol 3-phosphate (G3P), the key precursor for phospholipid synthesis. The polypeptide is Glycerol-3-phosphate dehydrogenase [NAD(P)+] (Leifsonia xyli subsp. xyli (strain CTCB07)).